A 32-amino-acid chain; its full sequence is Potassium channel toxin alpha-KTx 10.2 (32 aa).

Intrachain disulfides connect Cys-3–Cys-22, Cys-8–Cys-12, and Cys-27–Cys-29. Tyr-32 carries the tyrosine amide modification.

Belongs to the short scorpion toxin superfamily. Potassium channel inhibitor family. Alpha-KTx 10 subfamily. In terms of tissue distribution, expressed by the venom gland.

The protein resides in the secreted. Blocks Shaker B potassium-channels (Kv1.1/KCNA1 sub-family). The sequence is that of Potassium channel toxin alpha-KTx 10.2 from Centruroides noxius (Mexican scorpion).